Here is an 84-residue protein sequence, read N- to C-terminus: RNA-binding protein Hfq (84 aa).

A Sm domain is found at 11-71; sequence DTFLNHVRKN…ISTIMPGHPV (61 aa).

This sequence belongs to the Hfq family. In terms of assembly, homohexamer.

In terms of biological role, RNA chaperone that binds small regulatory RNA (sRNAs) and mRNAs to facilitate mRNA translational regulation in response to envelope stress, environmental stress and changes in metabolite concentrations. Also binds with high specificity to tRNAs. The protein is RNA-binding protein Hfq of Methylorubrum populi (strain ATCC BAA-705 / NCIMB 13946 / BJ001) (Methylobacterium populi).